Here is a 179-residue protein sequence, read N- to C-terminus: Ribosome maturation factor RimP (179 aa).

It belongs to the RimP family.

The protein localises to the cytoplasm. Functionally, required for maturation of 30S ribosomal subunits. In Prosthecochloris aestuarii (strain DSM 271 / SK 413), this protein is Ribosome maturation factor RimP.